A 377-amino-acid polypeptide reads, in one-letter code: Anhydro-N-acetylmuramic acid kinase (377 aa).

An ATP-binding site is contributed by 14-21 (GTSLDGVD).

Belongs to the anhydro-N-acetylmuramic acid kinase family.

The catalysed reaction is 1,6-anhydro-N-acetyl-beta-muramate + ATP + H2O = N-acetyl-D-muramate 6-phosphate + ADP + H(+). Its pathway is amino-sugar metabolism; 1,6-anhydro-N-acetylmuramate degradation. The protein operates within cell wall biogenesis; peptidoglycan recycling. Catalyzes the specific phosphorylation of 1,6-anhydro-N-acetylmuramic acid (anhMurNAc) with the simultaneous cleavage of the 1,6-anhydro ring, generating MurNAc-6-P. Is required for the utilization of anhMurNAc either imported from the medium or derived from its own cell wall murein, and thus plays a role in cell wall recycling. This chain is Anhydro-N-acetylmuramic acid kinase, found in Pasteurella multocida (strain Pm70).